The following is a 151-amino-acid chain: MKIQRHSKILEIINTKDVETQEELAEELKKRGVDVTQATVSRDIKELKLIKVLSENGRYKYATIAKSDGLLANKLVNVFSNTVISVENVQNFVVVKTLSGSGSAAAESIDSMNFDGIAGTIAGDNTIFILTINENKAEEIVKKLKKMLENK.

The protein belongs to the ArgR family.

It is found in the cytoplasm. The protein operates within amino-acid biosynthesis; L-arginine biosynthesis [regulation]. Regulates arginine biosynthesis genes. In Clostridium novyi (strain NT), this protein is Arginine repressor.